The primary structure comprises 81 residues: Control protein C.BamHI (81 aa).

In terms of domain architecture, HTH cro/C1-type spans 13 to 68; that stretch reads VRQIRLSKSNMSQEKLAFECDLHRTYISDIERGTRNVSLDNIEKISKALGVQPKDL. A DNA-binding region (H-T-H motif) is located at residues 25-44; the sequence is QEKLAFECDLHRTYISDIER.

Functionally, may help modulate methylase (M) and restriction enzyme (R) expression as cells undergo physiological changes such as sporulation or transformation. The polypeptide is Control protein C.BamHI (Bacillus amyloliquefaciens (Bacillus velezensis)).